Here is a 461-residue protein sequence, read N- to C-terminus: TWiK family of potassium channels protein 18 (461 aa).

The Cytoplasmic segment spans residues 1–21 (MAIVAQGVSTILTTFQKTFKG). Residues 22 to 42 (LLPLIILVAYTLLGAWIFWMI) form a helical membrane-spanning segment. An N-linked (GlcNAc...) asparagine glycan is attached at N88. Positions 116–136 (FLGSIFYCMTVYTTIGYGNIV) form an intramembrane region, pore-forming. Residues 144 to 164 (FATILYAFIGIPLTVLSLYCL) form a helical membrane-spanning segment. The Cytoplasmic portion of the chain corresponds to 165 to 224 (GSLFAKGCKMLWRFFLKSTRVVSKDLSNKISEAADNIEEGTTAITPSAEKTENNDDDLLS). The helical transmembrane segment at 225–245 (FPISGLLLITVIWVIFCAVLF) threads the bilayer. The pore-forming intramembrane region spans 253–273 (FGTSLYFTLISFTTIGFGDIL). A helical membrane pass occupies residues 281-301 (PIVGVLLLIGLSLVSTVMTLI). The Cytoplasmic segment spans residues 302–461 (QQQIEALASG…GNEDYLEHDI (160 aa)). The segment at 328-347 (REDGEVDEHVDPEEDPENNK) is disordered.

The protein belongs to the two pore domain potassium channel (TC 1.A.1.8) family. Expressed in body wall muscle.

Its subcellular location is the membrane. In terms of biological role, outwardly rectifying potassium channel protein; activity is sharply augmented by increase in temperature. This chain is TWiK family of potassium channels protein 18 (twk-18), found in Caenorhabditis elegans.